A 302-amino-acid polypeptide reads, in one-letter code: Proteasome subunit beta (302 aa).

Residues 1 to 50 (MTITGSRGFPDGYLAPGSSFLDFAAQHAPTIMPGTQPTFDTIPQDIAPHG) constitute a propeptide, removed in mature form; by autocatalysis. T51 (nucleophile) is an active-site residue. The segment at 277–302 (EPGRDGPGNRLPSQGSATIIPESDQS) is disordered. The segment covering 287–302 (LPSQGSATIIPESDQS) has biased composition (polar residues).

It belongs to the peptidase T1B family. As to quaternary structure, the 20S proteasome core is composed of 14 alpha and 14 beta subunits that assemble into four stacked heptameric rings, resulting in a barrel-shaped structure. The two inner rings, each composed of seven catalytic beta subunits, are sandwiched by two outer rings, each composed of seven alpha subunits. The catalytic chamber with the active sites is on the inside of the barrel. Has a gated structure, the ends of the cylinder being occluded by the N-termini of the alpha-subunits. Is capped by the proteasome-associated ATPase, ARC.

The protein resides in the cytoplasm. The enzyme catalyses Cleavage of peptide bonds with very broad specificity.. Its pathway is protein degradation; proteasomal Pup-dependent pathway. With respect to regulation, the formation of the proteasomal ATPase ARC-20S proteasome complex, likely via the docking of the C-termini of ARC into the intersubunit pockets in the alpha-rings, may trigger opening of the gate for substrate entry. Interconversion between the open-gate and close-gate conformations leads to a dynamic regulation of the 20S proteasome proteolysis activity. Functionally, component of the proteasome core, a large protease complex with broad specificity involved in protein degradation. This is Proteasome subunit beta from Jonesia denitrificans (strain ATCC 14870 / DSM 20603 / BCRC 15368 / CIP 55.134 / JCM 11481 / NBRC 15587 / NCTC 10816 / Prevot 55134) (Listeria denitrificans).